A 475-amino-acid polypeptide reads, in one-letter code: Ribulose bisphosphate carboxylase large chain (475 aa).

Positions 1-2 (MS) are excised as a propeptide. Pro3 carries the N-acetylproline modification. The residue at position 14 (Lys14) is an N6,N6,N6-trimethyllysine. 2 residues coordinate substrate: Asn123 and Thr173. The active-site Proton acceptor is the Lys175. Substrate is bound at residue Lys177. Mg(2+)-binding residues include Lys201, Asp203, and Glu204. Lys201 carries the post-translational modification N6-carboxylysine. Residue His294 is the Proton acceptor of the active site. Residues Arg295, His327, and Ser379 each coordinate substrate.

This sequence belongs to the RuBisCO large chain family. Type I subfamily. Heterohexadecamer of 8 large chains and 8 small chains; disulfide-linked. The disulfide link is formed within the large subunit homodimers. It depends on Mg(2+) as a cofactor. In terms of processing, the disulfide bond which can form in the large chain dimeric partners within the hexadecamer appears to be associated with oxidative stress and protein turnover.

Its subcellular location is the plastid. The protein resides in the chloroplast. The catalysed reaction is 2 (2R)-3-phosphoglycerate + 2 H(+) = D-ribulose 1,5-bisphosphate + CO2 + H2O. It carries out the reaction D-ribulose 1,5-bisphosphate + O2 = 2-phosphoglycolate + (2R)-3-phosphoglycerate + 2 H(+). RuBisCO catalyzes two reactions: the carboxylation of D-ribulose 1,5-bisphosphate, the primary event in carbon dioxide fixation, as well as the oxidative fragmentation of the pentose substrate in the photorespiration process. Both reactions occur simultaneously and in competition at the same active site. The protein is Ribulose bisphosphate carboxylase large chain of Chloranthus spicatus (Chulantree).